The chain runs to 446 residues: Tryptophan dimethylallyltransferase (446 aa).

L-tryptophan is bound by residues 83–84 (IL) and Glu92. 3 residues coordinate substrate: Arg103, Lys189, and Tyr191. L-tryptophan contacts are provided by Tyr193 and Arg246. Positions 259, 261, 263, 345, and 347 each coordinate substrate.

Belongs to the tryptophan dimethylallyltransferase family. As to quaternary structure, homodimer.

The catalysed reaction is L-tryptophan + dimethylallyl diphosphate = 4-(3-methylbut-2-enyl)-L-tryptophan + diphosphate. It functions in the pathway alkaloid biosynthesis; ergot alkaloid biosynthesis. Its function is as follows. Tryptophan dimethylallyltransferase; part of the gene cluster that mediates the biosynthesis of fungal ergot alkaloid. DmaW catalyzes the first step of ergot alkaloid biosynthesis by condensing dimethylallyl diphosphate (DMAP) and tryptophan to form 4-dimethylallyl-L-tryptophan. The second step is catalyzed by the methyltransferase easF that methylates 4-dimethylallyl-L-tryptophan in the presence of S-adenosyl-L-methionine, resulting in the formation of 4-dimethylallyl-L-abrine. The catalase easC and the FAD-dependent oxidoreductase easE then transform 4-dimethylallyl-L-abrine to chanoclavine-I which is further oxidized by easD in the presence of NAD(+), resulting in the formation of chanoclavine-I aldehyde. Chanoclavine-I aldehyde is the precursor of ergoamides and ergopeptines in Clavicipitaceae, and clavine-type alcaloids such as fumiclavine in Trichocomaceae. However, the metabolites downstream of chanoclavine-I aldehyde in Arthrodermataceae have not been identified yet. The sequence is that of Tryptophan dimethylallyltransferase from Arthroderma otae (strain ATCC MYA-4605 / CBS 113480) (Microsporum canis).